A 94-amino-acid polypeptide reads, in one-letter code: MNKAEFIDLVKKAGKYNSKREAEEAINAFTLAVETALSKGESVELVGFGKFETAEQKGKEGKVPGSDKTYKTEDKRVPKFKPGKILKQKVEEGK.

Belongs to the bacterial histone-like protein family. As to quaternary structure, homodimer.

Functionally, histone-like DNA-binding protein which is capable of wrapping DNA to stabilize it, and thus to prevent its denaturation under extreme environmental conditions. This chain is DNA-binding protein HU (hup), found in Helicobacter pylori (strain J99 / ATCC 700824) (Campylobacter pylori J99).